A 99-amino-acid chain; its full sequence is Aspartyl/glutamyl-tRNA(Asn/Gln) amidotransferase subunit C (99 aa).

The protein belongs to the GatC family. In terms of assembly, heterotrimer of A, B and C subunits.

The catalysed reaction is L-glutamyl-tRNA(Gln) + L-glutamine + ATP + H2O = L-glutaminyl-tRNA(Gln) + L-glutamate + ADP + phosphate + H(+). The enzyme catalyses L-aspartyl-tRNA(Asn) + L-glutamine + ATP + H2O = L-asparaginyl-tRNA(Asn) + L-glutamate + ADP + phosphate + 2 H(+). Functionally, allows the formation of correctly charged Asn-tRNA(Asn) or Gln-tRNA(Gln) through the transamidation of misacylated Asp-tRNA(Asn) or Glu-tRNA(Gln) in organisms which lack either or both of asparaginyl-tRNA or glutaminyl-tRNA synthetases. The reaction takes place in the presence of glutamine and ATP through an activated phospho-Asp-tRNA(Asn) or phospho-Glu-tRNA(Gln). This is Aspartyl/glutamyl-tRNA(Asn/Gln) amidotransferase subunit C from Burkholderia vietnamiensis (strain G4 / LMG 22486) (Burkholderia cepacia (strain R1808)).